Consider the following 768-residue polypeptide: Cullin-3 (768 aa).

Ser2 carries the N-acetylserine modification. The interval 2-41 (SNLSKGTGSRKDTKMRIRAFPMTMDEKYVNSIWDLLKNAI) is interaction with KLHL18. Position 585 is a phosphoserine (Ser585). The segment at 677–698 (VAAKQGESDPERKETRQKVDDD) is disordered. A compositionally biased stretch (basic and acidic residues) spans 682 to 698 (GESDPERKETRQKVDDD). The 63-residue stretch at 698-760 (DRKHEIEAAI…REYLARTPED (63 aa)) folds into the Cullin neddylation domain. Residue Lys712 forms a Glycyl lysine isopeptide (Lys-Gly) (interchain with G-Cter in NEDD8) linkage.

It belongs to the cullin family. Forms neddylation-dependent homodimers. Component of multiple BCR (BTB-CUL3-RBX1) E3 ubiquitin-protein ligase complexes formed of CUL3, RBX1 and a variable BTB domain-containing protein acting as both, adapter to cullin and substrate recognition subunit. The BCR complex may be active as a heterodimeric complex, in which NEDD8, covalently attached to one CUL3 molecule, binds to the C-terminus of a second CUL3 molecule. Interacts with RBX1, RNF7, CYCE and TIP120A/CAND1. Part of the BCR(SPOP) containing SPOP, and of BCR containing homodimeric SPOPL or the heterodimer formed by SPOP and SPOPL. Part of the probable BCR(KLHL9-KLHL13) complex with BTB domain proteins KLHL9 and KLHL13. Part of the BCR(KLHL41) complex containing KLHL41. Component of the BCR(KLHL12) E3 ubiquitin ligase complex, at least composed of CUL3 and KLHL12 and RBX1. Component of the BCR(KLHL3) E3 ubiquitin ligase complex, at least composed of CUL3 and KLHL3 and RBX1. Part of the BCR(ENC1) complex containing ENC1. Part of a complex consisting of BMI1/PCGF4, CUL3 and SPOP. Part of a complex consisting of BRMS1, CUL3 and SPOP. Component of the BCR(KLHL21) E3 ubiquitin ligase complex, at least composed of CUL3, KLHL21 and RBX1. Component of the BCR(KLHL22) E3 ubiquitin ligase complex, at least composed of CUL3, KLHL22 and RBX1. Component of the BCR(KLHL25) E3 ubiquitin ligase complex, at least composed of CUL3, KLHL25 and RBX1. Part of a complex consisting of MACROH2A1, CUL3 and SPOP. Component of the BCR(KLHL42) E3 ubiquitin ligase complex, at least composed of CUL3 and KLHL42. Interacts with KLHL42 (via the BTB domain). Interacts with KATNA1; the interaction is enhanced by KLHL42. Component of the BCR(KBTBD8) E3 ubiquitin ligase complex, at least composed of CUL3, KBTBD8 and RBX1. Interacts with KCTD5, KLHL9, KLHL11, KLHL13, GAN, ZBTB16, KLHL3, KLHL15, KLHL20, KLHL36, GMCL2, BTBD1. Part of a complex that contains CUL3, RBX1 and GAN. Interacts (via BTB domain) with KLHL17; the interaction regulates surface GRIK2 expression. Interacts with KCTD7. Part of the BCR(GAN) complex containing GAN. Part of the BCR(KEAP1) complex containing KEAP1. Interacts with KLHL10. Interacts with KAT5 and ATF2. Interacts with KCTD17 in the BCR(KCTD17) E3 ubiquitin ligase complex, at least composed of CUL3, KCTD17 and RBX1. Interacts (when neddylated) with ARIH1; leading to activate the E3 ligase activity of ARIH1. Interacts with COPS9 isoform 2. Interacts with PPP2R5B; this interaction is indirect and mediated through KLHL15-binding and leads to PPP2R5B proteasomal degradation. Interacts with RBBP8/CtIP; this interaction is indirect and mediated through KLHL15-binding and leads to RBBP8 proteasomal degradation. Interacts with KLHL24 in the BCR(KLHL24) E3 ubiquitin ligase complex, composed of CUL3, RBX1 and KLHL24. Interacts with RHOBTB2. Interacts with AURKA and KLHL18 (via BTB domain). Interacts (unneddylated form) with DCUN1D1, DCUN1D2, DCUN1D3, DCUN1D4 and DCUN1D5; these interactions promote the cullin neddylation. Component of a BCR3 (BTB-CUL3-RBX1) E3 ubiquitin ligase complex, also named Cul3-RING ubiquitin ligase complex CUL3(KBTBD6/7), composed of CUL3, RBX1, KBTBD6 and KBTBD7. Component of the BCR(KBTBD2) E3 ubiquitin ligase complex, at least composed of CUL3, KBTBD2 and RBX1. Interacts with KBTBD2 (via the BTB domain). Component of the BCR(KBTBD4) E3 ubiquitin ligase complex, at least composed of CUL3, KBTBD4 and RBX1. Component of the BCR(ARMC5) E3 ubiquitin ligase complex, composed of CUL3, ARMC5 and RBX1. Post-translationally, neddylated. Attachment of NEDD8 is required for the E3 ubiquitin-protein ligase activity of the BCR complex. Deneddylated via its interaction with the COP9 signalosome (CSN) complex. As to expression, brain, spermatozoa, and testis (at protein level). Widely expressed.

It is found in the nucleus. Its subcellular location is the golgi apparatus. The protein resides in the cell projection. The protein localises to the cilium. It localises to the flagellum. It is found in the cytoplasm. Its subcellular location is the cytoskeleton. The protein resides in the spindle. The protein localises to the microtubule organizing center. It localises to the centrosome. It is found in the spindle pole. Its pathway is protein modification; protein ubiquitination. Core component of multiple cullin-RING-based BCR (BTB-CUL3-RBX1) E3 ubiquitin-protein ligase complexes which mediate the ubiquitination and subsequent proteasomal degradation of target proteins. BCR complexes and ARIH1 collaborate in tandem to mediate ubiquitination of target proteins. As a scaffold protein may contribute to catalysis through positioning of the substrate and the ubiquitin-conjugating enzyme. The E3 ubiquitin-protein ligase activity of the complex is dependent on the neddylation of the cullin subunit and is inhibited by the association of the deneddylated cullin subunit with TIP120A/CAND1. The functional specificity of the BCR complex depends on the BTB domain-containing protein as the substrate recognition component. BCR(KLHL42) is involved in ubiquitination of KATNA1. BCR(SPOP) is involved in ubiquitination of BMI1/PCGF4, BRMS1, MACROH2A1 and DAXX, GLI2 and GLI3. Can also form a cullin-RING-based BCR (BTB-CUL3-RBX1) E3 ubiquitin-protein ligase complex containing homodimeric SPOPL or the heterodimer formed by SPOP and SPOPL; these complexes have lower ubiquitin ligase activity. BCR(KLHL9-KLHL13) controls the dynamic behavior of AURKB on mitotic chromosomes and thereby coordinates faithful mitotic progression and completion of cytokinesis. BCR(KLHL12) is involved in ER-Golgi transport by regulating the size of COPII coats, thereby playing a key role in collagen export, which is required for embryonic stem (ES) cells division: BCR(KLHL12) acts by mediating monoubiquitination of SEC31 (SEC31A or SEC31B). BCR(KLHL3) acts as a regulator of ion transport in the distal nephron; by mediating ubiquitination of WNK4. The BCR(KLHL20) E3 ubiquitin ligase complex is involved in interferon response and anterograde Golgi to endosome transport: it mediates both ubiquitination leading to degradation and 'Lys-33'-linked ubiquitination. The BCR(KLHL21) E3 ubiquitin ligase complex regulates localization of the chromosomal passenger complex (CPC) from chromosomes to the spindle midzone in anaphase and mediates the ubiquitination of AURKB. The BCR(KLHL22) ubiquitin ligase complex mediates monoubiquitination of PLK1, leading to PLK1 dissociation from phosphoreceptor proteins and subsequent removal from kinetochores, allowing silencing of the spindle assembly checkpoint (SAC) and chromosome segregation. The BCR(KLHL22) ubiquitin ligase complex is also responsible for the amino acid-stimulated 'Lys-48' polyubiquitination and proteasomal degradation of DEPDC5. Through the degradation of DEPDC5, releases the GATOR1 complex-mediated inhibition of the TORC1 pathway. The BCR(KLHL25) ubiquitin ligase complex is involved in translational homeostasis by mediating ubiquitination and subsequent degradation of hypophosphorylated EIF4EBP1 (4E-BP1). The BCR(KLHL25) ubiquitin ligase complex is also involved in lipid synthesis by mediating ubiquitination and degradation of ACLY. The BCR(KBTBD8) complex acts by mediating monoubiquitination of NOLC1 and TCOF1, leading to remodel the translational program of differentiating cells in favor of neural crest specification. Involved in ubiquitination of cyclin E and of cyclin D1 (in vitro) thus involved in regulation of G1/S transition. Involved in the ubiquitination of KEAP1, ENC1 and KLHL41. In concert with ATF2 and RBX1, promotes degradation of KAT5 thereby attenuating its ability to acetylate and activate ATM. The BCR(KCTD17) E3 ubiquitin ligase complex mediates ubiquitination and degradation of TCHP, a down-regulator of cilium assembly, thereby inducing ciliogenesis. The BCR(KLHL24) E3 ubiquitin ligase complex mediates ubiquitination of KRT14, controls KRT14 levels during keratinocytes differentiation, and is essential for skin integrity. The BCR(KLHL18) E3 ubiquitin ligase complex mediates the ubiquitination of AURKA leading to its activation at the centrosome which is required for initiating mitotic entry. The BCR(KEAP1) E3 ubiquitin ligase complex acts as a key sensor of oxidative and electrophilic stress by mediating ubiquitination and degradation of NFE2L2/NRF2, a transcription factor regulating expression of many cytoprotective genes. As part of the CUL3(KBTBD6/7) E3 ubiquitin ligase complex functions mediates 'Lys-48' ubiquitination and proteasomal degradation of TIAM1. By controlling the ubiquitination of that RAC1 guanine exchange factors (GEF), regulates RAC1 signal transduction and downstream biological processes including the organization of the cytoskeleton, cell migration and cell proliferation. The BCR(KBTBD4) E3 ubiquitin ligase complex targets CoREST corepressor complex components RCOR1, KDM1A/LSD1 and HDAC2 for proteasomal degradation with RCOR1 likely to be the primary target while degradation of KDM1A and HDAC2 is likely due to their association with RCOR1. It also targets RCOR3, MIER2 and MIER3 for proteasomal degradation as well as associated proteins ZNF217 and RREB1 with degradation being dependent on the presence of an ELM2 domain in the target proteins. The BCR(ARMC5) complex mediates premature transcription termination of transcripts that are unfavorably configured for transcriptional elongation by mediating ubiquitination of Pol II subunit POLR2A. Required for 'Lys-63'-linked ubiquitination of large ribosomal subunit protein MRPL12. The chain is Cullin-3 from Homo sapiens (Human).